The primary structure comprises 270 residues: Putative pyruvate, phosphate dikinase regulatory protein (270 aa).

151–158 (GVSRTSKT) serves as a coordination point for ADP.

The protein belongs to the pyruvate, phosphate/water dikinase regulatory protein family. PDRP subfamily.

It carries out the reaction N(tele)-phospho-L-histidyl/L-threonyl-[pyruvate, phosphate dikinase] + ADP = N(tele)-phospho-L-histidyl/O-phospho-L-threonyl-[pyruvate, phosphate dikinase] + AMP + H(+). The catalysed reaction is N(tele)-phospho-L-histidyl/O-phospho-L-threonyl-[pyruvate, phosphate dikinase] + phosphate + H(+) = N(tele)-phospho-L-histidyl/L-threonyl-[pyruvate, phosphate dikinase] + diphosphate. Functionally, bifunctional serine/threonine kinase and phosphorylase involved in the regulation of the pyruvate, phosphate dikinase (PPDK) by catalyzing its phosphorylation/dephosphorylation. In Streptococcus gordonii (strain Challis / ATCC 35105 / BCRC 15272 / CH1 / DL1 / V288), this protein is Putative pyruvate, phosphate dikinase regulatory protein.